The following is a 285-amino-acid chain: tRNA U34 carboxymethyltransferase (285 aa).

Carboxy-S-adenosyl-L-methionine-binding positions include lysine 56, tryptophan 70, lysine 75, glycine 94, 143-144, tyrosine 163, and arginine 278; that span reads VE.

The protein belongs to the class I-like SAM-binding methyltransferase superfamily. CmoB family. Homotetramer.

The enzyme catalyses carboxy-S-adenosyl-L-methionine + 5-hydroxyuridine(34) in tRNA = 5-carboxymethoxyuridine(34) in tRNA + S-adenosyl-L-homocysteine + H(+). Its function is as follows. Catalyzes carboxymethyl transfer from carboxy-S-adenosyl-L-methionine (Cx-SAM) to 5-hydroxyuridine (ho5U) to form 5-carboxymethoxyuridine (cmo5U) at position 34 in tRNAs. The protein is tRNA U34 carboxymethyltransferase of Campylobacter hominis (strain ATCC BAA-381 / DSM 21671 / CCUG 45161 / LMG 19568 / NCTC 13146 / CH001A).